A 338-amino-acid chain; its full sequence is Large ribosomal subunit protein uL10 (338 aa).

Positions 295–338 (EVPTIQPTTPPEKKEEEEKKEEEEEEAETVSEEELAEGLGALFG) are disordered. The segment covering 312–330 (EKKEEEEEEAETVSEEELA) has biased composition (acidic residues).

The protein belongs to the universal ribosomal protein uL10 family. In terms of assembly, part of the 50S ribosomal subunit. Forms part of the ribosomal stalk which helps the ribosome interact with GTP-bound translation factors. Forms a heptameric L10(L12)2(L12)2(L12)2 complex, where L10 forms an elongated spine to which the L12 dimers bind in a sequential fashion.

Its function is as follows. Forms part of the ribosomal stalk, playing a central role in the interaction of the ribosome with GTP-bound translation factors. In Staphylothermus marinus (strain ATCC 43588 / DSM 3639 / JCM 9404 / F1), this protein is Large ribosomal subunit protein uL10.